Here is a 235-residue protein sequence, read N- to C-terminus: 5'-methylthioadenosine/S-adenosylhomocysteine nucleosidase (235 aa).

Residue Glu-12 is the Proton acceptor of the active site. Substrate is bound by residues Gly-78, Met-153, and 174–175 (ME). Asp-198 acts as the Proton donor in catalysis.

Belongs to the PNP/UDP phosphorylase family. MtnN subfamily.

It carries out the reaction S-adenosyl-L-homocysteine + H2O = S-(5-deoxy-D-ribos-5-yl)-L-homocysteine + adenine. The enzyme catalyses S-methyl-5'-thioadenosine + H2O = 5-(methylsulfanyl)-D-ribose + adenine. The catalysed reaction is 5'-deoxyadenosine + H2O = 5-deoxy-D-ribose + adenine. It participates in amino-acid biosynthesis; L-methionine biosynthesis via salvage pathway; S-methyl-5-thio-alpha-D-ribose 1-phosphate from S-methyl-5'-thioadenosine (hydrolase route): step 1/2. Its function is as follows. Catalyzes the irreversible cleavage of the glycosidic bond in both 5'-methylthioadenosine (MTA) and S-adenosylhomocysteine (SAH/AdoHcy) to adenine and the corresponding thioribose, 5'-methylthioribose and S-ribosylhomocysteine, respectively. Also cleaves 5'-deoxyadenosine, a toxic by-product of radical S-adenosylmethionine (SAM) enzymes, into 5-deoxyribose and adenine. In Pseudoalteromonas translucida (strain TAC 125), this protein is 5'-methylthioadenosine/S-adenosylhomocysteine nucleosidase.